The sequence spans 405 residues: Tryptophan synthase beta chain (405 aa).

Lysine 95 carries the post-translational modification N6-(pyridoxal phosphate)lysine.

Belongs to the TrpB family. As to quaternary structure, tetramer of two alpha and two beta chains. Pyridoxal 5'-phosphate is required as a cofactor.

It catalyses the reaction (1S,2R)-1-C-(indol-3-yl)glycerol 3-phosphate + L-serine = D-glyceraldehyde 3-phosphate + L-tryptophan + H2O. It participates in amino-acid biosynthesis; L-tryptophan biosynthesis; L-tryptophan from chorismate: step 5/5. The beta subunit is responsible for the synthesis of L-tryptophan from indole and L-serine. The polypeptide is Tryptophan synthase beta chain (trpB) (Pseudomonas putida (Arthrobacter siderocapsulatus)).